We begin with the raw amino-acid sequence, 239 residues long: Homeobox-leucine zipper protein HOX12 (239 aa).

Residues 25–65 (ATSGGEQKKARQRRRRKVKPEAAAALAGESGGDEQAKKRRL) are disordered. Positions 58–117 (EQAKKRRLSDEQARFLEMSFKKERKLETPRKVQLAAELGLDAKQVAVWFQNRRARHKSKL) form a DNA-binding region, homeobox. A coiled-coil region spans residues 107-168 (QNRRARHKSK…KLAAVAAATT (62 aa)).

Belongs to the HD-ZIP homeobox family. Class I subfamily. In terms of tissue distribution, expressed in seedlings, roots, stems, leaf sheaths and panicles.

It localises to the nucleus. Its function is as follows. Probable transcription factor. This is Homeobox-leucine zipper protein HOX12 (HOX12) from Oryza sativa subsp. japonica (Rice).